The following is a 468-amino-acid chain: 6-phosphogluconate dehydrogenase, decarboxylating (468 aa).

Residues Gly-10–Gly-15, Asn-33–Ser-35, Val-74–Ala-76, and Asn-102 contribute to the NADP(+) site. Substrate is bound by residues Asn-102 and Ser-128 to Gly-130. The active-site Proton acceptor is the Lys-183. Residue His-186–Asn-187 participates in substrate binding. The active-site Proton donor is the Glu-190. Residues Tyr-191, Lys-260, Arg-287, Arg-445, and His-451 each contribute to the substrate site.

The protein belongs to the 6-phosphogluconate dehydrogenase family. Homodimer.

The catalysed reaction is 6-phospho-D-gluconate + NADP(+) = D-ribulose 5-phosphate + CO2 + NADPH. It functions in the pathway carbohydrate degradation; pentose phosphate pathway; D-ribulose 5-phosphate from D-glucose 6-phosphate (oxidative stage): step 3/3. Its function is as follows. Catalyzes the oxidative decarboxylation of 6-phosphogluconate to ribulose 5-phosphate and CO(2), with concomitant reduction of NADP to NADPH. The chain is 6-phosphogluconate dehydrogenase, decarboxylating (gnd) from Escherichia coli.